Reading from the N-terminus, the 547-residue chain is Glutamyl-tRNA(Gln) amidotransferase subunit B, mitochondrial (547 aa).

This sequence belongs to the GatB/GatE family. GatB subfamily. Subunit of the heterotrimeric GatFAB amidotransferase (AdT) complex, composed of A, B and F subunits.

It localises to the mitochondrion. The catalysed reaction is L-glutamyl-tRNA(Gln) + L-glutamine + ATP + H2O = L-glutaminyl-tRNA(Gln) + L-glutamate + ADP + phosphate + H(+). Functionally, allows the formation of correctly charged Gln-tRNA(Gln) through the transamidation of misacylated Glu-tRNA(Gln) in the mitochondria. The reaction takes place in the presence of glutamine and ATP through an activated gamma-phospho-Glu-tRNA(Gln). This is Glutamyl-tRNA(Gln) amidotransferase subunit B, mitochondrial from Lachancea thermotolerans (strain ATCC 56472 / CBS 6340 / NRRL Y-8284) (Yeast).